An 85-amino-acid chain; its full sequence is Putative transmembrane protein ORF85 (85 aa).

Helical transmembrane passes span 12-32 and 44-64; these read FPPT…KFLS and LGII…GAGI.

It localises to the host membrane. The chain is Putative transmembrane protein ORF85 from Acidianus convivator (ABV).